A 173-amino-acid polypeptide reads, in one-letter code: Crossover junction endodeoxyribonuclease RuvC (173 aa).

Active-site residues include Asp-8, Glu-67, and Asp-139. 3 residues coordinate Mg(2+): Asp-8, Glu-67, and Asp-139.

The protein belongs to the RuvC family. Homodimer which binds Holliday junction (HJ) DNA. The HJ becomes 2-fold symmetrical on binding to RuvC with unstacked arms; it has a different conformation from HJ DNA in complex with RuvA. In the full resolvosome a probable DNA-RuvA(4)-RuvB(12)-RuvC(2) complex forms which resolves the HJ. The cofactor is Mg(2+).

It is found in the cytoplasm. The enzyme catalyses Endonucleolytic cleavage at a junction such as a reciprocal single-stranded crossover between two homologous DNA duplexes (Holliday junction).. The RuvA-RuvB-RuvC complex processes Holliday junction (HJ) DNA during genetic recombination and DNA repair. Endonuclease that resolves HJ intermediates. Cleaves cruciform DNA by making single-stranded nicks across the HJ at symmetrical positions within the homologous arms, yielding a 5'-phosphate and a 3'-hydroxyl group; requires a central core of homology in the junction. The consensus cleavage sequence is 5'-(A/T)TT(C/G)-3'. Cleavage occurs on the 3'-side of the TT dinucleotide at the point of strand exchange. HJ branch migration catalyzed by RuvA-RuvB allows RuvC to scan DNA until it finds its consensus sequence, where it cleaves and resolves the cruciform DNA. The protein is Crossover junction endodeoxyribonuclease RuvC of Erwinia tasmaniensis (strain DSM 17950 / CFBP 7177 / CIP 109463 / NCPPB 4357 / Et1/99).